The sequence spans 258 residues: Regulatory protein RecX (258 aa).

This sequence belongs to the RecX family.

Its subcellular location is the cytoplasm. In terms of biological role, modulates RecA activity. The protein is Regulatory protein RecX of Streptococcus uberis (strain ATCC BAA-854 / 0140J).